The following is a 59-amino-acid chain: Cuticle protein 7 isoform c (59 aa).

Gln1 is subject to Pyrrolidone carboxylic acid.

This chain is Cuticle protein 7 isoform c, found in Limulus polyphemus (Atlantic horseshoe crab).